The primary structure comprises 349 residues: MATGTLPDAGQILNSLINSILLVDDDLAVHYANPAAQQLLAQSSRKLFGTPLPELLSYFSLNIGLMQESLAAGQGFTDNEVTLVIDGRSHILSLTAQRLPEGYILLEMAPMDNQRRLSQEQLQHAQQIAARDLVRGLAHEIKNPLGGLRGAAQLLSKALPDPALMEYTKVIIEQADRLRNLVDRLLGPQHPGMHVTESIHKVAERVVKLVSMELPDNVKLVRDYDPSLPELPHDPDQIEQVLLNIVRNALQALGPEGGEITLRTRTAFQLTLHGVRYRLAARIDVEDNGPGIPSHLQDTLFYPMVSGREGGTGLGLSIARSLIDQHSGKIEFTSWPGHTEFSVYLPIRK.

Positions 5 to 78 constitute a PAS domain; sequence TLPDAGQILN…SLAAGQGFTD (74 aa). One can recognise a Histidine kinase domain in the interval 136–349; that stretch reads GLAHEIKNPL…EFSVYLPIRK (214 aa). His139 carries the phosphohistidine; by autocatalysis modification. Lys329 is an ATP binding site.

Autophosphorylated.

It is found in the cytoplasm. It catalyses the reaction ATP + protein L-histidine = ADP + protein N-phospho-L-histidine.. Its function is as follows. Member of the two-component regulatory system NtrB/NtrC, which controls expression of the nitrogen-regulated (ntr) genes in response to nitrogen limitation. Under conditions of nitrogen limitation, NtrB autophosphorylates and transfers the phosphoryl group to NtrC. In the presence of nitrogen, acts as a phosphatase that dephosphorylates and inactivates NtrC. The polypeptide is Sensory histidine kinase/phosphatase NtrB (ntrB) (Klebsiella oxytoca).